The chain runs to 676 residues: RNA helicase NPH-II (676 aa).

The 176-residue stretch at 172–347 (FSAWISHRPV…VFLPNPAFIH (176 aa)) folds into the Helicase ATP-binding domain. 185 to 192 (GGTGVGKT) contacts ATP. A DEXH box motif is present at residues 296–299 (DEVH). The Helicase C-terminal domain maps to 366 to 535 (NPSSRMAYIE…NYILYANKFN (170 aa)).

The protein belongs to the DEAD box helicase family. DEAH subfamily. Monomer.

It is found in the virion. The enzyme catalyses ATP + H2O = ADP + phosphate + H(+). Its function is as follows. NTP-dependent helicase that catalyzes unidirectional unwinding of 3'tailed duplex RNAs and plays an important role during transcription of early mRNAs, presumably by preventing R-loop formation behind the elongating RNA polymerase. Might also play a role in the export of newly synthesized mRNA chains out of the core into the cytoplasm. Required for replication and propagation of viral particles. The sequence is that of RNA helicase NPH-II (OPG084) from Homo sapiens (Human).